Here is a 155-residue protein sequence, read N- to C-terminus: Archaemetzincin (155 aa).

Residue His-109 coordinates Zn(2+). Glu-110 acts as the Proton acceptor in catalysis. The Zn(2+) site is built by His-113, His-119, Cys-120, Cys-125, Cys-144, and Cys-147.

The protein belongs to the peptidase M54 family. Monomer. It depends on Zn(2+) as a cofactor.

Its function is as follows. Probable zinc metalloprotease whose natural substrate is unknown. The sequence is that of Archaemetzincin from Pyrobaculum aerophilum (strain ATCC 51768 / DSM 7523 / JCM 9630 / CIP 104966 / NBRC 100827 / IM2).